A 545-amino-acid polypeptide reads, in one-letter code: CTP synthase (545 aa).

An amidoligase domain region spans residues 1–266; it reads MTKNYIFITG…DDYICNYFKL (266 aa). S14 is a CTP binding site. UTP is bound at residue S14. ATP-binding positions include 15–20 and D72; that span reads SLGKGI. 2 residues coordinate Mg(2+): D72 and E140. Residues 147–149, 187–192, and K223 each bind CTP; these read DIE and KTKPTQ. UTP contacts are provided by residues 187–192 and K223; that span reads KTKPTQ. 239 to 241 contacts ATP; it reads KDV. In terms of domain architecture, Glutamine amidotransferase type-1 spans 291-543; sequence VIGIIGKYIK…IKSAGKHKKN (253 aa). L-glutamine is bound at residue G352. C379 serves as the catalytic Nucleophile; for glutamine hydrolysis. L-glutamine contacts are provided by residues 380 to 383, E403, and R471; that span reads LGMQ. Residues H516 and E518 contribute to the active site.

Belongs to the CTP synthase family. As to quaternary structure, homotetramer.

The enzyme catalyses UTP + L-glutamine + ATP + H2O = CTP + L-glutamate + ADP + phosphate + 2 H(+). It carries out the reaction L-glutamine + H2O = L-glutamate + NH4(+). It catalyses the reaction UTP + NH4(+) + ATP = CTP + ADP + phosphate + 2 H(+). The protein operates within pyrimidine metabolism; CTP biosynthesis via de novo pathway; CTP from UDP: step 2/2. Allosterically activated by GTP, when glutamine is the substrate; GTP has no effect on the reaction when ammonia is the substrate. The allosteric effector GTP functions by stabilizing the protein conformation that binds the tetrahedral intermediate(s) formed during glutamine hydrolysis. Inhibited by the product CTP, via allosteric rather than competitive inhibition. Functionally, catalyzes the ATP-dependent amination of UTP to CTP with either L-glutamine or ammonia as the source of nitrogen. Regulates intracellular CTP levels through interactions with the four ribonucleotide triphosphates. In Buchnera aphidicola subsp. Acyrthosiphon pisum (strain 5A), this protein is CTP synthase.